The sequence spans 213 residues: LIM domain-containing protein PLIM2c (213 aa).

2 LIM zinc-binding domains span residues 9-69 (DKCK…LFKE) and 105-165 (DKCA…LFLE). The tract at residues 177 to 213 (ANHRRSTAEEDKTEPKEDEANPTEEETSDAAAEEHES) is disordered. Positions 182–195 (STAEEDKTEPKEDE) are enriched in basic and acidic residues.

As to quaternary structure, interacts with F-actin. In terms of tissue distribution, exclusively expressed in pollen grains.

The protein localises to the cytoplasm. Its subcellular location is the cytoskeleton. Binds to actin filaments and promotes cross-linking into thick bundles. Has an actin-stabilizing activity. Associates predominantly with long and dynamic actin bundles in the shank of growing pollen tubes. The actin regulatory activities are inhibited by pH &gt; 6.8 and/or high [Ca(2+)]. This is LIM domain-containing protein PLIM2c from Arabidopsis thaliana (Mouse-ear cress).